We begin with the raw amino-acid sequence, 729 residues long: Fatty acid oxidation complex subunit alpha (729 aa).

The tract at residues 1–189 (MLYKGDTLYL…KIGLVDGVVK (189 aa)) is enoyl-CoA hydratase/isomerase. Position 296 (D296) interacts with substrate. The interval 311 to 729 (ETPKQAAVLG…ARPVGDLKTA (419 aa)) is 3-hydroxyacyl-CoA dehydrogenase. Residues M324, D343, 400–402 (VVE), K407, and S429 each bind NAD(+). The active-site For 3-hydroxyacyl-CoA dehydrogenase activity is the H450. NAD(+) is bound at residue N453. Residues N500 and Y660 each coordinate substrate. Residues 708–729 (RHNEPYYPPVEPARPVGDLKTA) form a disordered region.

In the N-terminal section; belongs to the enoyl-CoA hydratase/isomerase family. It in the C-terminal section; belongs to the 3-hydroxyacyl-CoA dehydrogenase family. In terms of assembly, heterotetramer of two alpha chains (FadB) and two beta chains (FadA).

It carries out the reaction a (3S)-3-hydroxyacyl-CoA + NAD(+) = a 3-oxoacyl-CoA + NADH + H(+). It catalyses the reaction a (3S)-3-hydroxyacyl-CoA = a (2E)-enoyl-CoA + H2O. The enzyme catalyses a 4-saturated-(3S)-3-hydroxyacyl-CoA = a (3E)-enoyl-CoA + H2O. The catalysed reaction is (3S)-3-hydroxybutanoyl-CoA = (3R)-3-hydroxybutanoyl-CoA. It carries out the reaction a (3Z)-enoyl-CoA = a 4-saturated (2E)-enoyl-CoA. It catalyses the reaction a (3E)-enoyl-CoA = a 4-saturated (2E)-enoyl-CoA. It participates in lipid metabolism; fatty acid beta-oxidation. Functionally, involved in the aerobic and anaerobic degradation of long-chain fatty acids via beta-oxidation cycle. Catalyzes the formation of 3-oxoacyl-CoA from enoyl-CoA via L-3-hydroxyacyl-CoA. It can also use D-3-hydroxyacyl-CoA and cis-3-enoyl-CoA as substrate. This Escherichia coli (strain UTI89 / UPEC) protein is Fatty acid oxidation complex subunit alpha.